Reading from the N-terminus, the 185-residue chain is Elongation factor P (185 aa).

This sequence belongs to the elongation factor P family.

The protein localises to the cytoplasm. Its pathway is protein biosynthesis; polypeptide chain elongation. Involved in peptide bond synthesis. Stimulates efficient translation and peptide-bond synthesis on native or reconstituted 70S ribosomes in vitro. Probably functions indirectly by altering the affinity of the ribosome for aminoacyl-tRNA, thus increasing their reactivity as acceptors for peptidyl transferase. The polypeptide is Elongation factor P (Bordetella avium (strain 197N)).